The primary structure comprises 165 residues: Nascent polypeptide-associated complex subunit beta (165 aa).

Positions 33–97 (TTDDKRLQST…PQTKKLQDIL (65 aa)) constitute an NAC-A/B domain. The segment at 120-165 (QKQAPGAGDVPATIQEEDDDDDVPDLVVGETFETPATEEAPKAAAS) is disordered. Positions 134-143 (QEEDDDDDVP) are enriched in acidic residues. A compositionally biased stretch (low complexity) spans 144–165 (DLVVGETFETPATEEAPKAAAS).

It belongs to the NAC-beta family. As to quaternary structure, part of the nascent polypeptide-associated complex (NAC).

The protein is Nascent polypeptide-associated complex subunit beta of Arabidopsis thaliana (Mouse-ear cress).